Reading from the N-terminus, the 444-residue chain is Phosphoglucosamine mutase (444 aa).

Ser100 (phosphoserine intermediate) is an active-site residue. The Mg(2+) site is built by Ser100, Asp240, Asp242, and Asp244. Ser100 carries the phosphoserine modification.

This sequence belongs to the phosphohexose mutase family. Requires Mg(2+) as cofactor. In terms of processing, activated by phosphorylation.

The catalysed reaction is alpha-D-glucosamine 1-phosphate = D-glucosamine 6-phosphate. Its function is as follows. Catalyzes the conversion of glucosamine-6-phosphate to glucosamine-1-phosphate. This Desulforamulus reducens (strain ATCC BAA-1160 / DSM 100696 / MI-1) (Desulfotomaculum reducens) protein is Phosphoglucosamine mutase.